Consider the following 122-residue polypeptide: Large ribosomal subunit protein uL14 (122 aa).

Belongs to the universal ribosomal protein uL14 family. Part of the 50S ribosomal subunit. Forms a cluster with proteins L3 and L19. In the 70S ribosome, L14 and L19 interact and together make contacts with the 16S rRNA in bridges B5 and B8.

In terms of biological role, binds to 23S rRNA. Forms part of two intersubunit bridges in the 70S ribosome. The protein is Large ribosomal subunit protein uL14 of Nocardia farcinica (strain IFM 10152).